The chain runs to 240 residues: Ubiquinone biosynthesis O-methyltransferase (240 aa).

Residues R44, G64, D85, and M129 each contribute to the S-adenosyl-L-methionine site.

Belongs to the methyltransferase superfamily. UbiG/COQ3 family.

The catalysed reaction is a 3-demethylubiquinol + S-adenosyl-L-methionine = a ubiquinol + S-adenosyl-L-homocysteine + H(+). The enzyme catalyses a 3-(all-trans-polyprenyl)benzene-1,2-diol + S-adenosyl-L-methionine = a 2-methoxy-6-(all-trans-polyprenyl)phenol + S-adenosyl-L-homocysteine + H(+). Its pathway is cofactor biosynthesis; ubiquinone biosynthesis. O-methyltransferase that catalyzes the 2 O-methylation steps in the ubiquinone biosynthetic pathway. The chain is Ubiquinone biosynthesis O-methyltransferase from Photorhabdus laumondii subsp. laumondii (strain DSM 15139 / CIP 105565 / TT01) (Photorhabdus luminescens subsp. laumondii).